The following is a 380-amino-acid chain: Probable protein phosphatase 2C 2 (380 aa).

Residues Arg-69–Phe-339 enclose the PPM-type phosphatase domain. Mn(2+)-binding residues include Asp-113, Gly-114, Asp-287, and Asp-330.

The protein belongs to the PP2C family. Requires Mg(2+) as cofactor. The cofactor is Mn(2+).

It catalyses the reaction O-phospho-L-seryl-[protein] + H2O = L-seryl-[protein] + phosphate. It carries out the reaction O-phospho-L-threonyl-[protein] + H2O = L-threonyl-[protein] + phosphate. The chain is Probable protein phosphatase 2C 2 from Oryza sativa subsp. japonica (Rice).